A 5104-amino-acid chain; its full sequence is Malformin synthetase mlfA (5104 aa).

An adenylation 1 region spans residues 225-616 (ERHAVNRPHS…CGRADTQVKL (392 aa)). The Carrier 1 domain occupies 757-830 (SRLEQEIQLA…EAASLAEVQE (74 aa)). Ser791 carries the post-translational modification O-(pantetheine 4'-phosphoryl)serine. Residues 868–1299 (EDVFPCTTMQ…ALNTLSLLQA (432 aa)) form a condensation 1 region. Residues 1327-1716 (DRWVTRQPEG…GRKDTQVKLR (390 aa)) are adenylation 2. Residues 1854–1931 (TPASELERTL…QLAAEFGGPA (78 aa)) enclose the Carrier 2 domain. Ser1891 is modified (O-(pantetheine 4'-phosphoryl)serine). 2 disordered regions span residues 1928 to 1961 (GGPA…DGVD) and 1998 to 2025 (TNKT…KVDS). Composition is skewed to low complexity over residues 1934–1958 (SASS…STND) and 2003–2013 (SVSSSSSSSSS). The tract at residues 2066–2481 (EDIYPATPLQ…TVSYSDKEAL (416 aa)) is condensation 2. The interval 2504-2896 (VRTPHAPAVC…IGRRDGQLKL (393 aa)) is adenylation 3. Residues 3032-3108 (RPVTSQEREM…QLICHLNTIR (77 aa)) enclose the Carrier 3 domain. Ser3069 bears the O-(pantetheine 4'-phosphoryl)serine mark. Condensation regions lie at residues 3125–3590 (WVAL…TYDQ) and 3611–4029 (NIYP…EQLV). Residues 4054–4444 (HSSREAVCAW…VGRKDNQIKF (391 aa)) form an adenylation 4 region. The region spanning 4578–4654 (MPSTAAERKM…DLSDQARSLI (77 aa)) is the Carrier 4 domain. At Ser4615 the chain carries O-(pantetheine 4'-phosphoryl)serine. Residues 4691-5018 (DVLPTTSFQR…LQTIVQHQNN (328 aa)) form a condensation 5 region.

It belongs to the NRP synthetase family.

It functions in the pathway secondary metabolite biosynthesis. Functionally, nonribosomal peptide synthetase; part of the gene cluster that mediates the biosynthesis of malformins, cyclic pentapeptides with a disulfide bond between 2 consecutive cysteins, that show potential anti-tumor as well as antimalarial and antitrypanosomal properties. The nonribosomal peptide synthetase mlfA is responsible of the formation of the cyclic pentapeptide. The malformin biosynthesis clusters in malformin-producing fungi also contain enzymes involved in the formation of the disulfide bond between the two consecutive cysteins within malformins, in addition to additional tailoring enzymes such as methyltransferases or oxidoreductases. They are also composed of up to 4 major facilitator superfamily transporters, and transcription factors probably involved in the regulation of the expression of those clusters. The sequence is that of Malformin synthetase mlfA from Aspergillus vadensis (strain CBS 113365 / IMI 142717 / IBT 24658).